The sequence spans 274 residues: 2,3,4,5-tetrahydropyridine-2,6-dicarboxylate N-succinyltransferase (274 aa).

2 residues coordinate substrate: R103 and D140.

The protein belongs to the transferase hexapeptide repeat family. In terms of assembly, homotrimer.

It localises to the cytoplasm. The enzyme catalyses (S)-2,3,4,5-tetrahydrodipicolinate + succinyl-CoA + H2O = (S)-2-succinylamino-6-oxoheptanedioate + CoA. It functions in the pathway amino-acid biosynthesis; L-lysine biosynthesis via DAP pathway; LL-2,6-diaminopimelate from (S)-tetrahydrodipicolinate (succinylase route): step 1/3. The sequence is that of 2,3,4,5-tetrahydropyridine-2,6-dicarboxylate N-succinyltransferase from Actinobacillus pleuropneumoniae serotype 5b (strain L20).